Here is a 503-residue protein sequence, read N- to C-terminus: MIVLFVEPIRFFDTTLRDGEQTPGVSLTPAGKLEIATHLADVGVHVIEAGSAAASVGERESIRAIADAGLAAECCTYVRALPGDIDLAADAGADSVHLVVPVSDLHIAKKLRKTREQVSEMAWSAVEYAKERGLVVELSGEDASRADQDFLAEVFREGVERGADRLCFCDTVGLLTPERAAAIIPPLLFAPLSIHCHDDLGFGLATTVAALRAGATCAHVTVNGLGERAGNTSLEELVMALEVLYGVDTGIATEELYPLSTHVARLTGVPLATNKPIVGEMAFTHESGIHAHGVMRDASTYEPLQPERVGRRRRIVLGKHSGSAAVEAALHDMGYAPSAAQLKEIVDRIKRLGDAGMRITDADIMAIADTVMEIEFTPCIELRQFTIVSGSNAIPTASVTMLVRGEEITGAAVGTGPVDAAIRALQRSVADVGSVRLDEYSVDAITGGTDALVDVSVKLSKDGKTVTSRGARTDIIMASVEAVIAGMNRLLREEHEDRSQDSD.

Residues 9–257 form the Pyruvate carboxyltransferase domain; it reads IRFFDTTLRD…DTGIATEELY (249 aa).

This sequence belongs to the alpha-IPM synthase/homocitrate synthase family. In terms of assembly, homodimer.

The catalysed reaction is pyruvate + acetyl-CoA + H2O = (3R)-citramalate + CoA + H(+). The protein operates within amino-acid biosynthesis; L-isoleucine biosynthesis; 2-oxobutanoate from pyruvate: step 1/3. Catalyzes the condensation of pyruvate and acetyl-coenzyme A to form (R)-citramalate. The polypeptide is Putative (R)-citramalate synthase CimA (Methanoculleus marisnigri (strain ATCC 35101 / DSM 1498 / JR1)).